We begin with the raw amino-acid sequence, 140 residues long: HTH-type transcriptional regulator AdhR (140 aa).

In terms of domain architecture, HTH merR-type spans 1–69; the sequence is MNIAQVAKQF…IEALIEYTTL (69 aa). A DNA-binding region (H-T-H motif) is located at residues 3 to 22; that stretch reads IAQVAKQFGLTAATLRYYER. Positions 75-125 form a coiled coil; that stretch reads RTVEARKNILADERQRLIEKRKEIDETIKRLDTKIKDYDGKLRENEAKLKS. The tract at residues 120–140 is disordered; sequence EAKLKSRPKTESLHGSVEQRR.

Its function is as follows. Transcriptional regulator involved in the response to aldehyde stress. Binds to the promoter region of the adhA-yraA operon, the yraC and its own promoter region; binding is unchanged in the presence of aldehydes. This chain is HTH-type transcriptional regulator AdhR (adhR), found in Bacillus subtilis (strain 168).